A 31-amino-acid chain; its full sequence is MYMDIVSLAWAALMVVFTFSLSLVVWGRSGL.

A helical transmembrane segment spans residues 5–25 (IVSLAWAALMVVFTFSLSLVV).

Belongs to the PetN family. In terms of assembly, the 4 large subunits of the cytochrome b6-f complex are cytochrome b6, subunit IV (17 kDa polypeptide, PetD), cytochrome f and the Rieske protein, while the 4 small subunits are PetG, PetL, PetM and PetN. The complex functions as a dimer.

The protein resides in the plastid. It is found in the chloroplast thylakoid membrane. In terms of biological role, component of the cytochrome b6-f complex, which mediates electron transfer between photosystem II (PSII) and photosystem I (PSI), cyclic electron flow around PSI, and state transitions. In Cicer arietinum (Chickpea), this protein is Cytochrome b6-f complex subunit 8.